The following is a 713-amino-acid chain: Forkhead box protein P2 (713 aa).

The segment covering methionine 1–aspartate 28 has biased composition (polar residues). Disordered regions lie at residues methionine 1 to serine 45 and aspartate 279 to serine 337. Positions threonine 290–serine 303 are enriched in low complexity. Residues serine 313–leucine 322 are compositionally biased toward polar residues. Residues alanine 324–glycine 335 are compositionally biased toward basic and acidic residues. The C2H2-type zinc finger occupies glycine 344 to histidine 369. The tract at residues valine 386 to leucine 407 is leucine-zipper. The tract at residues proline 420–valine 424 is CTBP1-binding. Low complexity predominate over residues threonine 436 to glutamine 457. Positions threonine 436–threonine 463 are disordered. Positions arginine 502–leucine 592 form a DNA-binding region, fork-head. 2 disordered regions span residues leucine 647–isoleucine 666 and valine 676–glutamate 713. Residues leucine 697–glutamate 713 show a composition bias toward acidic residues.

In terms of assembly, forms homodimers and heterodimers with FOXP1 and FOXP4. Dimerization is required for DNA-binding. Interacts with CTBP1. Interacts with FOXP1. Interacts with TBR1. Interacts with ZMYM2.

It localises to the nucleus. Functionally, transcriptional repressor that may play a role in the specification and differentiation of lung epithelium. May also play a role in developing neural, gastrointestinal and cardiovascular tissues. Can act with CTBP1 to synergistically repress transcription but CTPBP1 is not essential. Plays a role in synapse formation by regulating SRPX2 levels. This Hylobates lar (Lar gibbon) protein is Forkhead box protein P2 (FOXP2).